The chain runs to 674 residues: Glutaminase kidney isoform, mitochondrial (674 aa).

The transit peptide at 1-54 (MMRLRGSAMLRELLLRPPAAVGGVLRRTQPLGTLCRRPRGGSRPAAGLVAAARL) directs the protein to the mitochondrion. The disordered stretch occupies residues 56–123 (PWWGGGGRAK…PGETDAFGNS (68 aa)). A compositionally biased stretch (gly residues) spans 58 to 71 (WGGGGRAKGPGSGG). Over residues 89–101 (PPQQQQQQQQQPG) the composition is skewed to low complexity. An N6-succinyllysine mark is found at lysine 135 and lysine 169. Substrate is bound at residue serine 291. Lysine 316 is subject to N6-acetyllysine. Residues 320 to 327 (GLRFNKLF) are highly mobile activation loop. 6 residues coordinate substrate: asparagine 340, glutamate 386, asparagine 393, tyrosine 419, tyrosine 471, and valine 489. ANK repeat units follow at residues 590–619 (DSRTALHVAAAEGHVEVVKFLLEACKVNPF) and 624–653 (WNNTPMDEALHFGHHDVFKILQEYQVQYTP). The segment at 652–674 (TPQGDSDDGKENQTVHKNLDGLL) is disordered. A Phosphoserine modification is found at serine 657. The span at 658 to 674 (DDGKENQTVHKNLDGLL) shows a compositional bias: basic and acidic residues.

This sequence belongs to the glutaminase family. In terms of assembly, homotetramer, dimer of dimers. Tetramer composed of 68 and 65 kDa peptides in a 1:3 ratio. Can assemble into higher oligomers (in vitro), but the physiological significance of this is not clear. Interacts with RAF1 and MAP2K2. Interacts with ATCAY; the interaction is direct and may control GLS localization, negatively regulating its activity. In terms of processing, synthesized as a 74-kDa cytosolic precursor which is proteolytically processed by the mitochondrial-processing peptidase (MPP) via a 72-kDa intermediate to yield the mature mitochondrial 68- and 65-kDa subunits. As to expression, kidney, brain, and intestine.

The protein resides in the mitochondrion. Its subcellular location is the cytoplasm. The protein localises to the cytosol. It is found in the mitochondrion matrix. It carries out the reaction L-glutamine + H2O = L-glutamate + NH4(+). Its activity is regulated as follows. Enzyme activity is increased by phosphate, due to increased kcat and increased substrate affinity. Its function is as follows. Catalyzes the first reaction in the primary pathway for the renal catabolism of glutamine. Plays a role in maintaining acid-base homeostasis. Regulates the levels of the neurotransmitter glutamate, the main excitatory neurotransmitter in the brain. The chain is Glutaminase kidney isoform, mitochondrial (Gls) from Rattus norvegicus (Rat).